The following is a 684-amino-acid chain: PAN2-PAN3 deadenylation complex subunit PAN3 (684 aa).

3 disordered regions span residues 1-38 (MLPPPKSAAVQIVRPPSPSSEKAKEKEKKHSPEKRETA), 68-97 (DPSTPQNSSPVAHAPTPSAPTPLAGTPARE), and 112-146 (VPKGLDSSPRASTPSVPTPSAPTPPVWPSLPSTGL). The span at 21–38 (EKAKEKEKKHSPEKRETA) shows a compositional bias: basic and acidic residues. The C3H1-type zinc-finger motif lies at 36–65 (ETAQRICRNVMIYGYCKYQDQGCIYYHPPA). The segment covering 127–139 (VPTPSAPTPPVWP) has biased composition (pro residues). Residues 263-544 (GANGASAPGL…SIDEVVKMMG (282 aa)) are pseudokinase domain. ATP is bound by residues arginine 326 and 375–382 (DYHPLSTT). The interval 387 to 412 (YLSPNPPEPSPASALANQPPKRRSSP) is disordered. 444–445 (SK) lines the ATP pocket. A coiled-coil region spans residues 545–583 (PRILNELDAVQSYADVLENELGAEVENGRIVRLLTKLGF). The tract at residues 584 to 684 (INERAEFELD…NAGNNHRVHR (101 aa)) is knob domain.

This sequence belongs to the protein kinase superfamily. PAN3 family. Homodimer. Forms a heterotrimer with a catalytic subunit PAN2 to form the poly(A)-nuclease (PAN) deadenylation complex. Interacts (via PAM-2 motif) with poly(A)-binding protein PAB1 (via PABC domain), conferring substrate specificity of the enzyme complex.

It localises to the cytoplasm. In terms of biological role, regulatory subunit of the poly(A)-nuclease (PAN) deadenylation complex, one of two cytoplasmic mRNA deadenylases involved in mRNA turnover. PAN specifically shortens poly(A) tails of RNA and the activity is stimulated by poly(A)-binding protein PAB1. PAN deadenylation is followed by rapid degradation of the shortened mRNA tails by the CCR4-NOT complex. Deadenylated mRNAs are then degraded by two alternative mechanisms, namely exosome-mediated 3'-5' exonucleolytic degradation, or deadenylation-dependent mRNA decaping and subsequent 5'-3' exonucleolytic degradation by XRN1. May also be involved in post-transcriptional maturation of mRNA poly(A) tails. PAN3 acts as a positive regulator for PAN activity, recruiting the catalytic subunit PAN2 to mRNA via its interaction with RNA and with PAB1. The chain is PAN2-PAN3 deadenylation complex subunit PAN3 from Cryptococcus neoformans var. neoformans serotype D (strain B-3501A) (Filobasidiella neoformans).